A 162-amino-acid chain; its full sequence is MTEQLNTNQQNDEAQFMIQRIYIKDLSYETPNTPAVFQQQWEPELKLDLNTTTTQLDKNVYEVVLTVTTTVMNQKTTAFLVEVKQAGIFTIQGAAASQLDHLLHSFCPSILFPYAREAITSQVIRGSFPQLVLAPINFDALYMQQLEEKQKATGAKDETVSH.

This sequence belongs to the SecB family. Homotetramer, a dimer of dimers. One homotetramer interacts with 1 SecA dimer.

It is found in the cytoplasm. Its function is as follows. One of the proteins required for the normal export of preproteins out of the cell cytoplasm. It is a molecular chaperone that binds to a subset of precursor proteins, maintaining them in a translocation-competent state. It also specifically binds to its receptor SecA. The protein is Protein-export protein SecB of Legionella pneumophila (strain Paris).